Reading from the N-terminus, the 440-residue chain is MRSTELVHWFRQSTPYVNMHRGKTFVIMLDGDTIACPNFVNIINDISLLHSLGIKLVLVFGARYQINELLQQHQIESVYHKNIRITDLTSLELVKQAVGKLNYDIASRLSLRLPHSPLIDVVSGNFVLAQPIGVDDGIDYQLSGKIRRINTESIQQQLDRDAIVLIGPIAPSVTGESFNLPFEEIASQLAIKLKAEKLIGFSATQGILDENNQTISDLLPQDAELYLAKLIQQNQYHSSQARFLQAAIEACRFGIKRSHLISYEEDGSLLQELFTRDGVGTQLSMEHSETIRLATVSDIPALLELIRPLEQQGILVKRSREQLEMEINQYTIIDRDGVIIACAALNCYADEKMAEMACVAVHPDYRNSSRGDILLEAIQKRAKQLGIEKLFVLTTRTVHWFQERGFQLAEIADLPDKKRQHYNYQRRSKILIQALQNKKG.

One can recognise an N-acetyltransferase domain in the interval 289–429; it reads ETIRLATVSD…QHYNYQRRSK (141 aa).

Belongs to the acetyltransferase family. ArgA subfamily.

Its subcellular location is the cytoplasm. It catalyses the reaction L-glutamate + acetyl-CoA = N-acetyl-L-glutamate + CoA + H(+). Its pathway is amino-acid biosynthesis; L-arginine biosynthesis; N(2)-acetyl-L-ornithine from L-glutamate: step 1/4. In Pasteurella multocida (strain Pm70), this protein is Amino-acid acetyltransferase (argA).